The following is a 492-amino-acid chain: Probable cytochrome P450 313a1 (492 aa).

Cysteine 438 lines the heme pocket.

It belongs to the cytochrome P450 family. The cofactor is heme.

Its subcellular location is the endoplasmic reticulum membrane. It localises to the microsome membrane. May be involved in the metabolism of insect hormones and in the breakdown of synthetic insecticides. The chain is Probable cytochrome P450 313a1 (Cyp313a1) from Drosophila melanogaster (Fruit fly).